The following is a 598-amino-acid chain: Pantothenate kinase 1 (598 aa).

A disordered region spans residues 32 to 161 (ARPGDQGKAG…SPGAPVGTSA (130 aa)). Over residues 38–49 (GKAGGGSPGWGC) the composition is skewed to gly residues. Phosphoserine is present on Ser-215. A Nucleolar localization signal motif is present at residues 218–235 (KKCRLRRRMDSGRKNRPP). The Proton acceptor role is filled by Glu-363. Positions 417, 420, and 432 each coordinate acetyl-CoA.

It belongs to the type II pantothenate kinase family. In terms of assembly, homodimer. Expressed at high levels in brain, heart, kidney, liver, skeletal muscle and testis. In terms of tissue distribution, detected at much lower levels in kidney, liver, brain and testis and not detected in heart or skeletal muscle.

It localises to the cytoplasm. It is found in the nucleus. The protein resides in the nucleolus. Its subcellular location is the cytosol. The protein localises to the cytoplasmic vesicle. It localises to the clathrin-coated vesicle. It is found in the recycling endosome. The catalysed reaction is (R)-pantothenate + ATP = (R)-4'-phosphopantothenate + ADP + H(+). It participates in cofactor biosynthesis; coenzyme A biosynthesis; CoA from (R)-pantothenate: step 1/5. With respect to regulation, regulated by feedback inhibition by CoA and its thioesters. In terms of biological role, catalyzes the phosphorylation of pantothenate to generate 4'-phosphopantothenate in the first and rate-determining step of coenzyme A (CoA) synthesis. This chain is Pantothenate kinase 1 (PANK1), found in Homo sapiens (Human).